A 478-amino-acid polypeptide reads, in one-letter code: MNWTLASPEIVLALCGLVILLVGVARNRREDTFLCAMLTLGAFLVTGLLTVSGALGLGFQGQFVADPFAVMVKLLILSGASIAVVLSLDYNRHHGMERFEFPVLTLFSTVGMMVMVSASNFMTLYMGLELMSLAIYVLAAFARDELRSAEAGLKYFVLGSLASGLLLYGISLIYGFAGTMDFSALREALAHPAGTSPGLTVGVVFVIAGLAFKISAAPFHMWTPDVYEGSPTPVTAFMGTAPKVAAIAMMLRTLVTPFHGVLVQWQHVVALISVVSMVWGALAAIGQTSIKRLMAYSSIGHMGYALVGLAAGSQAGIRGLLIYLVTYVFMNTGTFACILAMRRRGRQLEKVSDLAGAGRTDPALALLLAIFMFSMAGIPPMSGFFGKLYVFLAAVQAGEPLLWGLAVIGVLTSVIGAYYYLRVVKVMYFDDASEGPFEAWPTSVSVVAVGSAIFTALFFLFPAPILAAADLAAKALLR.

A run of 14 helical transmembrane segments spans residues 5–25 (LASP…VGVA), 37–57 (MLTL…ALGL), 68–88 (FAVM…VLSL), 99–119 (FEFP…VSAS), 121–141 (FMTL…LAAF), 156–176 (FVLG…IYGF), 199–219 (LTVG…AAPF), 231–251 (PTPV…AMML), 268–288 (VVAL…IGQT), 293–313 (LMAY…AAGS), 320–340 (LLIY…CILA), 365–385 (ALLL…SGFF), 401–421 (LLWG…YYYL), and 446–466 (VVAV…APIL).

The protein belongs to the complex I subunit 2 family. NDH-1 is composed of 14 different subunits. Subunits NuoA, H, J, K, L, M, N constitute the membrane sector of the complex.

Its subcellular location is the cell inner membrane. The enzyme catalyses a quinone + NADH + 5 H(+)(in) = a quinol + NAD(+) + 4 H(+)(out). In terms of biological role, NDH-1 shuttles electrons from NADH, via FMN and iron-sulfur (Fe-S) centers, to quinones in the respiratory chain. The immediate electron acceptor for the enzyme in this species is believed to be ubiquinone. Couples the redox reaction to proton translocation (for every two electrons transferred, four hydrogen ions are translocated across the cytoplasmic membrane), and thus conserves the redox energy in a proton gradient. This chain is NADH-quinone oxidoreductase subunit N, found in Granulibacter bethesdensis (strain ATCC BAA-1260 / CGDNIH1).